Here is a 262-residue protein sequence, read N- to C-terminus: Catechol O-methyltransferase domain-containing protein 1 (262 aa).

Residues 12–32 (AALALGSAALGAAFATGLFLG) form a helical; Signal-anchor for type II membrane protein membrane-spanning segment. S-adenosyl-L-methionine contacts are provided by residues Asp-108, 110 to 111 (GT), Ser-116, Glu-134, Val-135, Ala-163, Asp-185, Asp-187, and Tyr-194.

The protein belongs to the class I-like SAM-binding methyltransferase superfamily. Cation-dependent O-methyltransferase family. As to quaternary structure, homodimer.

It is found in the membrane. Functionally, putative O-methyltransferase. The chain is Catechol O-methyltransferase domain-containing protein 1 (COMTD1) from Homo sapiens (Human).